Consider the following 510-residue polypeptide: Aromatic-L-amino-acid decarboxylase (510 aa).

Positions 1-17 are enriched in polar residues; it reads MSHIPISNTIPTKQTDG. Residues 1–28 are disordered; it reads MSHIPISNTIPTKQTDGNGKANISPDKL. Position 117 (threonine 117) interacts with substrate. 5 residues coordinate pyridoxal 5'-phosphate: alanine 183, serine 184, histidine 227, aspartate 305, and asparagine 334. Substrate is bound at residue histidine 227. Histidine 227 is an active-site residue. At lysine 337 the chain carries N6-(pyridoxal phosphate)lysine. Residues 358-384 are disordered; that stretch reads NAFNVDPLYLKHDMQGSAPDYRHWQIP.

Belongs to the group II decarboxylase family. As to quaternary structure, homodimer. It depends on pyridoxal 5'-phosphate as a cofactor. In terms of tissue distribution, hypoderm isoform is expressed only in hypodermal epithelium and the CNS isoform only in central nervous system. Expressed in the adult head (at protein level).

It catalyses the reaction L-dopa + H(+) = dopamine + CO2. It carries out the reaction 5-hydroxy-L-tryptophan + H(+) = serotonin + CO2. Catalyzes the decarboxylation of L-3,4-dihydroxyphenylalanine (L-DOPA) to dopamine and L-5-hydroxytryptophan (5-HTP) to serotonin. Catalyzes the formation of serotonin more efficiently than dopamine. Displays no activity to tyrosine. Variation in the synthesis of bioamines may be a factor contributing to natural variation in life span. The chain is Aromatic-L-amino-acid decarboxylase (Ddc) from Drosophila melanogaster (Fruit fly).